A 261-amino-acid polypeptide reads, in one-letter code: MEDGELDFSNQEVFSSSEMGELPPSNCSMDSFFDGLLMDTNAACTHTHTCNPTGPENTHTHTCFHVHTKILPDESDEKVSTDDTAESCGKKGEKRPLGNREAVRKYREKKKAKAASLEDEVARLRAVNQQLVKRLQNQATLEAEVSRLKCLLVDLRGRIDGEIGSFPYQKPMAANIPSFSHMMNPCNVQCDDEVYCPQNVFGVNSQEGASINDQGLSGCDFDQLQCMANQNLNGNGNGSFSNVNTSVSNKRKGGHRASRAV.

2 disordered regions span residues 1–22 (MEDG…MGEL) and 74–100 (ESDE…LGNR). Residues 8 to 18 (FSNQEVFSSSE) are compositionally biased toward polar residues. The span at 88–100 (CGKKGEKRPLGNR) shows a compositional bias: basic and acidic residues. The bZIP domain occupies 89–155 (GKKGEKRPLG…SRLKCLLVDL (67 aa)). The tract at residues 90 to 113 (KKGEKRPLGNREAVRKYREKKKAK) is basic motif. A leucine-zipper region spans residues 117–131 (LEDEVARLRAVNQQL). The span at 237-248 (NGSFSNVNTSVS) shows a compositional bias: low complexity. The interval 237-261 (NGSFSNVNTSVSNKRKGGHRASRAV) is disordered. Over residues 249-261 (NKRKGGHRASRAV) the composition is skewed to basic residues.

The protein localises to the nucleus. Transcription factor involved in the response to zinc ion deficiency. Binds to the consensus sequence 5'-[AG]TGTCGACA[CT]-3' also called zinc deficiency response element (ZDRE). The ZDRE sequence is conserved in the plant kingdom and present in the promoters of genes that constitute the primary response to zinc deficiency, comprising additional ZIP metal transporter genes. Required for zinc accumulation in roots. Mediates the expression of the zinc transporters ZIP3, ZIP4, ZIP5 and ZIP9 during growth in zinc-deficient conditions. ZIP9 transporter is involved in zinc uptake in roots. The protein is Basic leucine zipper 19 of Arabidopsis thaliana (Mouse-ear cress).